Reading from the N-terminus, the 105-residue chain is uncharacterized protein (105 aa).

The signal sequence occupies residues 1-24 (MYWPCLVITPFTVGESFCLLLSLG).

This is an uncharacterized protein from Saccharomyces cerevisiae (strain ATCC 204508 / S288c) (Baker's yeast).